Reading from the N-terminus, the 652-residue chain is DNA ligase (652 aa).

NAD(+) contacts are provided by residues 29–33 (DAEYD), 78–79 (SL), and glutamate 107. Residue lysine 109 is the N6-AMP-lysine intermediate of the active site. Positions 130, 164, 278, and 302 each coordinate NAD(+). Zn(2+) is bound by residues cysteine 395, cysteine 398, cysteine 413, and cysteine 418. Positions 577 to 652 (DENAALSGMT…IKDEAWLESL (76 aa)) constitute a BRCT domain.

It belongs to the NAD-dependent DNA ligase family. LigA subfamily. The cofactor is Mg(2+). Mn(2+) serves as cofactor.

It carries out the reaction NAD(+) + (deoxyribonucleotide)n-3'-hydroxyl + 5'-phospho-(deoxyribonucleotide)m = (deoxyribonucleotide)n+m + AMP + beta-nicotinamide D-nucleotide.. In terms of biological role, DNA ligase that catalyzes the formation of phosphodiester linkages between 5'-phosphoryl and 3'-hydroxyl groups in double-stranded DNA using NAD as a coenzyme and as the energy source for the reaction. It is essential for DNA replication and repair of damaged DNA. This Streptococcus suis (strain 98HAH33) protein is DNA ligase.